A 364-amino-acid polypeptide reads, in one-letter code: Long-wave-sensitive opsin 1 (364 aa).

The disordered stretch occupies residues 1–23 (MAQQWSLQRLAGRHPQDSYEDST). Residues 1–52 (MAQQWSLQRLAGRHPQDSYEDSTQSSIFTYTNSNSTRGPFEGPNYHIAPRWV) are Extracellular-facing. The O-linked (GlcNAc) serine glycan is linked to serine 22. A glycan (N-linked (GlcNAc...) asparagine) is linked at asparagine 34. Residues 53–77 (YHLTSVWMIFVVTASVFTNGLVLAA) traverse the membrane as a helical segment. Residues 78-89 (TMKFKKLRHPLN) are Cytoplasmic-facing. The chain crosses the membrane as a helical span at residues 90 to 115 (WILVNLAVADLAETVIASTISIVNQV). Residues 116-129 (SGYFVLGHPMCVLE) lie on the Extracellular side of the membrane. Cysteine 126 and cysteine 203 are disulfide-bonded. A helical membrane pass occupies residues 130–149 (GYTVSLCGITGLWSLAIISW). Residues 150–168 (ERWMVVCKPFGNVRFDAKL) are Cytoplasmic-facing. Residues 169–192 (AIVGIAFSWIWAAVWTAPPIFGWS) form a helical membrane-spanning segment. Over 193–218 (RYWPHGLKTSCGPDVFSGSSYPGVQS) the chain is Extracellular. The chain crosses the membrane as a helical span at residues 219–246 (YMIVLMVTCCIIPLAIIMLCYLQVWLAI). Residues 247 to 268 (RAVAKQQKESESTQKAEKEVTR) lie on the Cytoplasmic side of the membrane. The chain crosses the membrane as a helical span at residues 269–292 (MVVVMIFAYCVCWGPYTFFACFAA). The Extracellular segment spans residues 293-300 (ANPGYAFH). The helical transmembrane segment at 301–325 (PLMAALPAYFAKSATIYNPVIYVFM) threads the bilayer. Position 312 is an N6-(retinylidene)lysine (lysine 312). Topologically, residues 326–364 (NRQFRNCILQLFGKKVDDGSELSSASKTEVSSVSSVSPA) are cytoplasmic.

Belongs to the G-protein coupled receptor 1 family. Opsin subfamily. Phosphorylated on some or all of the serine and threonine residues present in the C-terminal region. In terms of tissue distribution, the three color pigments are found in the cone photoreceptor cells.

The protein resides in the membrane. Visual pigments are the light-absorbing molecules that mediate vision. They consist of an apoprotein, opsin, covalently linked to cis-retinal. In Homo sapiens (Human), this protein is Long-wave-sensitive opsin 1 (OPN1LW).